The chain runs to 397 residues: Elongation factor Tu (397 aa).

A tr-type G domain is found at 10-206 (KPHVNIGTIG…AVDEYIPTPE (197 aa)). Residues 19–26 (GHVDHGKT) form a G1 region. 19 to 26 (GHVDHGKT) contributes to the GTP binding site. T26 contacts Mg(2+). A G2 region spans residues 60–64 (GITIS). Residues 81–84 (DCPG) are G3. GTP contacts are provided by residues 81–85 (DCPGH) and 136–139 (NKAD). The tract at residues 136-139 (NKAD) is G4. Positions 174-176 (SAL) are G5.

The protein belongs to the TRAFAC class translation factor GTPase superfamily. Classic translation factor GTPase family. EF-Tu/EF-1A subfamily. Monomer.

Its subcellular location is the cytoplasm. The catalysed reaction is GTP + H2O = GDP + phosphate + H(+). Functionally, GTP hydrolase that promotes the GTP-dependent binding of aminoacyl-tRNA to the A-site of ribosomes during protein biosynthesis. In Clostridium tetani (strain Massachusetts / E88), this protein is Elongation factor Tu.